The chain runs to 176 residues: Large ribosomal subunit protein uL10 (176 aa).

This sequence belongs to the universal ribosomal protein uL10 family. In terms of assembly, part of the ribosomal stalk of the 50S ribosomal subunit. The N-terminus interacts with L11 and the large rRNA to form the base of the stalk. The C-terminus forms an elongated spine to which L12 dimers bind in a sequential fashion forming a multimeric L10(L12)X complex.

In terms of biological role, forms part of the ribosomal stalk, playing a central role in the interaction of the ribosome with GTP-bound translation factors. The protein is Large ribosomal subunit protein uL10 (rplJ) of Streptomyces antibioticus.